Here is a 416-residue protein sequence, read N- to C-terminus: E3 ubiquitin-protein ligase DMA1 (416 aa).

Residues 1–30 (MSTNTVPSSPPNQTPPAASGIATSHDHTKF) form a disordered region. Residues Lys-150, Lys-204, Lys-217, Lys-237, Lys-240, Lys-260, Lys-300, Lys-306, Lys-313, and Lys-317 each participate in a glycyl lysine isopeptide (Lys-Gly) (interchain with G-Cter in ubiquitin) cross-link. The 64-residue stretch at 189 to 252 (IIIGRYTERV…SGTFLNHQRL (64 aa)) folds into the FHA domain. The RING-type zinc finger occupies 327 to 371 (CSICLNKIKPCQAIFISPCAHSWHFHCVRRLVIMNYPQFMCPNCR).

This sequence belongs to the DMA1 family. Interacts with CDC123. Interacts with PCL1. Post-translationally, UBC4-dependent autoubiquitination occurs at Lys-150, Lys-204, Lys-217, Lys-237, Lys-240, Lys-260, Lys-300, Lys-306, Lys-313 and Lys-317. UBC4-dependent autoubiquitination is responsible for DMA2 turnover. UBC13/MMS2-dependent autoubiquitination occurs at Lys-237 and Lys-306. Lys-204 and Lys-306 are also ubiquitinated in trans by DMA2 E3 ligase in association with UBC4.

It is found in the cytoplasm. The catalysed reaction is S-ubiquitinyl-[E2 ubiquitin-conjugating enzyme]-L-cysteine + [acceptor protein]-L-lysine = [E2 ubiquitin-conjugating enzyme]-L-cysteine + N(6)-ubiquitinyl-[acceptor protein]-L-lysine.. Functionally, E3 ubiquitin-protein ligase which functions in cell cycle retarding in conjunction with the UBC4 and UBC13/MMS2 complex, 2 E2 ubiquitin conjugating enzymes. Involved in nutritional control of the cell cycle. Targets the G1 cyclin PCL1 for destruction. Required for proper spindle positioning, likely regulating septin ring deposition at the bud neck. This is E3 ubiquitin-protein ligase DMA1 from Saccharomyces cerevisiae (strain ATCC 204508 / S288c) (Baker's yeast).